A 195-amino-acid chain; its full sequence is dCTP deaminase (195 aa).

DCTP is bound by residues 110-115 (RSSLAR), Asp-128, 136-138 (VLE), Tyr-171, Lys-178, and Gln-182. Glu-138 acts as the Proton donor/acceptor in catalysis. The segment covering 169–179 (RPYSSRKDAKY) has biased composition (basic and acidic residues). Positions 169–195 (RPYSSRKDAKYKNQQSAVASRIDEDKE) are disordered.

Belongs to the dCTP deaminase family. Homotrimer.

The catalysed reaction is dCTP + H2O + H(+) = dUTP + NH4(+). The protein operates within pyrimidine metabolism; dUMP biosynthesis; dUMP from dCTP (dUTP route): step 1/2. Functionally, catalyzes the deamination of dCTP to dUTP. The polypeptide is dCTP deaminase (Haemophilus influenzae (strain 86-028NP)).